A 423-amino-acid chain; its full sequence is MPSLFAQSLAIIATLQATLGLATPVSAPDTVIGKHAGGYVNAVYFTNWGIYGRNYQPADLPASQISHVLYSFLNLSNNGTVYSGDSWADIDKHYPNDSWNDVGTNVYGCVKQLYLLKKANRNMKTMLSIGGWTWSTNFPAAASTAATRSNFAKSAVTIMKDWGFDGIDVDWEYPADDVQATNMVLLLQAIREELDAYAAKFAQGYHFQLSIAAPAGPANYNKLHLGDLGKVLDYINLMAYDFSGSWSNSSAHNANLYAIRANLNAPFNTDHAVNDYIKGGVPASKIVLALPIYGNSFQKTNGIGKPFSGAGDGSWENGIWDYKVHSKAGADGIYDDGDKGYYSYDPSVKELISIDTPDITKDKVTYLKSKGLGGSMFWEASSDRSGSQSLIGTSSNKLGGPDSTENLLNYPDSKYDNMRKQMA.

Residues 1–22 form the signal peptide; sequence MPSLFAQSLAIIATLQATLGLA. The GH18 domain maps to 39–401; sequence YVNAVYFTNW…GTSSNKLGGP (363 aa). Asn74, Asn78, and Asn96 each carry an N-linked (GlcNAc...) asparagine glycan. Chitin contacts are provided by residues 103 to 104 and 130 to 133; these read GT and GGWT. Catalysis depends on Glu172, which acts as the Proton donor. Residues Tyr173 and 238 to 241 contribute to the chitin site; that span reads MAYD. N-linked (GlcNAc...) asparagine glycosylation is present at Asn248. A chitin-binding site is contributed by Trp378. A disordered region spans residues 380–423; the sequence is ASSDRSGSQSLIGTSSNKLGGPDSTENLLNYPDSKYDNMRKQMA. Positions 383–407 are enriched in polar residues; sequence DRSGSQSLIGTSSNKLGGPDSTENL. Positions 413–423 are enriched in basic and acidic residues; it reads SKYDNMRKQMA.

This sequence belongs to the glycosyl hydrolase 18 family. Chitinase class V subfamily.

The protein resides in the secreted. It carries out the reaction Random endo-hydrolysis of N-acetyl-beta-D-glucosaminide (1-&gt;4)-beta-linkages in chitin and chitodextrins.. Functionally, secreted chitinase involved in the degradation of chitin, a component of the cell walls of fungi and exoskeletal elements of some animals (including worms and arthropods). Participates in the infection process and directly acts in the penetration process of the host cuticle. The protein is Endochitinase 1 (chit1) of Metarhizium anisopliae (Entomophthora anisopliae).